We begin with the raw amino-acid sequence, 98 residues long: NADH-ubiquinone oxidoreductase chain 4L (98 aa).

A run of 3 helical transmembrane segments spans residues 1–21 (MSLTYMNMFMAFTISLLGLLM), 29–49 (SLLCLEGMMLSLFVMMTMTIL), and 61–81 (IILLVFAACEAALGLSLLVMV).

Belongs to the complex I subunit 4L family. In terms of assembly, core subunit of respiratory chain NADH dehydrogenase (Complex I) which is composed of 45 different subunits.

It is found in the mitochondrion inner membrane. It carries out the reaction a ubiquinone + NADH + 5 H(+)(in) = a ubiquinol + NAD(+) + 4 H(+)(out). Its function is as follows. Core subunit of the mitochondrial membrane respiratory chain NADH dehydrogenase (Complex I) which catalyzes electron transfer from NADH through the respiratory chain, using ubiquinone as an electron acceptor. Part of the enzyme membrane arm which is embedded in the lipid bilayer and involved in proton translocation. In Stenoderma rufum (Red fruit bat), this protein is NADH-ubiquinone oxidoreductase chain 4L (MT-ND4L).